Here is a 523-residue protein sequence, read N- to C-terminus: Probable malate:quinone oxidoreductase (523 aa).

It belongs to the MQO family. The cofactor is FAD.

The enzyme catalyses (S)-malate + a quinone = a quinol + oxaloacetate. It participates in carbohydrate metabolism; tricarboxylic acid cycle; oxaloacetate from (S)-malate (quinone route): step 1/1. The protein is Probable malate:quinone oxidoreductase of Agrobacterium fabrum (strain C58 / ATCC 33970) (Agrobacterium tumefaciens (strain C58)).